The sequence spans 127 residues: S-adenosylmethionine decarboxylase proenzyme (127 aa).

The Schiff-base intermediate with substrate; via pyruvic acid role is filled by S63. Residue S63 is modified to Pyruvic acid (Ser); by autocatalysis. H68 serves as the catalytic Proton acceptor; for processing activity. Catalysis depends on C83, which acts as the Proton donor; for catalytic activity.

The protein belongs to the prokaryotic AdoMetDC family. Type 1 subfamily. As to quaternary structure, heterotetramer of two alpha and two beta chains arranged as a dimer of alpha/beta heterodimers. The cofactor is pyruvate. In terms of processing, is synthesized initially as an inactive proenzyme. Formation of the active enzyme involves a self-maturation process in which the active site pyruvoyl group is generated from an internal serine residue via an autocatalytic post-translational modification. Two non-identical subunits are generated from the proenzyme in this reaction, and the pyruvate is formed at the N-terminus of the alpha chain, which is derived from the carboxyl end of the proenzyme. The post-translation cleavage follows an unusual pathway, termed non-hydrolytic serinolysis, in which the side chain hydroxyl group of the serine supplies its oxygen atom to form the C-terminus of the beta chain, while the remainder of the serine residue undergoes an oxidative deamination to produce ammonia and the pyruvoyl group blocking the N-terminus of the alpha chain.

The catalysed reaction is S-adenosyl-L-methionine + H(+) = S-adenosyl 3-(methylsulfanyl)propylamine + CO2. The protein operates within amine and polyamine biosynthesis; S-adenosylmethioninamine biosynthesis; S-adenosylmethioninamine from S-adenosyl-L-methionine: step 1/1. In terms of biological role, catalyzes the decarboxylation of S-adenosylmethionine to S-adenosylmethioninamine (dcAdoMet), the propylamine donor required for the synthesis of the polyamines spermine and spermidine from the diamine putrescine. This Carboxydothermus hydrogenoformans (strain ATCC BAA-161 / DSM 6008 / Z-2901) protein is S-adenosylmethionine decarboxylase proenzyme.